A 322-amino-acid chain; its full sequence is Solute carrier family 35 member B1 (322 aa).

Transmembrane regions (helical) follow at residues 12–32 (LRLP…GILQ), 51–71 (FALT…KILI), 85–105 (WLYA…NSAL), 136–156 (YPLA…LFMY), 168–188 (TVGF…LTGV), 210–230 (LWST…WEFL), 243–263 (ILLF…TVVY), and 285–305 (VILF…LVFL). Positions 318 to 322 (KKTSH) match the Di-lysine motif motif.

The protein belongs to the nucleotide-sugar transporter family. SLC35B subfamily.

It localises to the endoplasmic reticulum membrane. The enzyme catalyses ADP(in) + ATP(out) = ADP(out) + ATP(in). It catalyses the reaction UDP(out) + ATP(in) = UDP(in) + ATP(out). It carries out the reaction UTP(out) + ATP(in) = UTP(in) + ATP(out). The catalysed reaction is dATP(out) + ATP(in) = dATP(in) + ATP(out). ATP:ADP antiporter that catalyzes the exchange of ATP and ADP across the endoplasmic reticulum (ER) membrane. Imports ATP from the cytosol to the ER lumen and exports ADP in the opposite direction. Regulates ER energy metabolism and protein biogenesis. Appears to be part of a calcium-dependent ER to cytosol low energy response axis, where calcium efflux from ER to the cytosol triggers ATP import into the ER lumen to maintain sufficient ATP supply. Provides ATP to ER chaperone HSPA5 that drives protein folding and trafficking in the ER. Can transport dATP, UTP or UDP in exchange for ATP, but the physiological relevance of this process remains to be established. This is Solute carrier family 35 member B1 (Slc35b1) from Mus musculus (Mouse).